The primary structure comprises 488 residues: Histamine H1 receptor (488 aa).

Over 1-38 (MSFLPGMTPVTLSNFSWALEDRMLEGNSTTTPTRQLMP) the chain is Extracellular. Residues N14 and N27 are each glycosylated (N-linked (GlcNAc...) asparagine). A helical transmembrane segment spans residues 39-59 (LVVVLSSVSLVTVALNLLVLY). The Cytoplasmic segment spans residues 60-73 (AVRSERKLHTVGNL). The helical transmembrane segment at 74–98 (YIVSLSVADLIVGAVVMPMSILYLH) threads the bilayer. At 99–106 (RSAWILGR) the chain is on the extracellular side. The chain crosses the membrane as a helical span at residues 107-132 (PLCLFWLSMDYVASTASIFSVFILCI). C109 and C189 are oxidised to a cystine. 2 residues coordinate histamine: D116 and T121. The interval 116–121 (DYVAST) is important for agonist binding. Over 133 to 153 (DRYRSVQQPLRYLRYRTKTRA) the chain is Cytoplasmic. A phosphothreonine mark is found at T149 and T151. A helical transmembrane segment spans residues 154-173 (SATILGAWLLSFLWVIPILG). Topologically, residues 174–197 (WHHFMAPTSEPREKKCETDFYDVT) are extracellular. The helical transmembrane segment at 198-220 (WFKVMTAIINFYLPTLLMLWFYI) threads the bilayer. N207 is a binding site for histamine. At 221 to 417 (RIYKAVRRHC…LNRERKAAKQ (197 aa)) the chain is on the cytoplasmic side. Residue S239 is modified to Phosphoserine. Residues 259-274 (RMGKESPWEDPKRCSK) are compositionally biased toward basic and acidic residues. Residues 259 to 285 (RMGKESPWEDPKRCSKDASGVHTPMPS) form a disordered region. 5 positions are modified to phosphoserine: S345, S381, S383, S397, and S399. Residues 418–441 (LGCIMAAFILCWIPYFVFFMVIAF) form a helical membrane-spanning segment. Residues 425 to 429 (FILCW) are important for agonist binding. Y432 is a histamine binding site. A disulfide bridge links C442 with C445. Topologically, residues 442 to 447 (CKSCSN) are extracellular. A helical transmembrane segment spans residues 448-470 (EPVHMFTIWLGYLNSTLNPLIYP). The Cytoplasmic portion of the chain corresponds to 471–488 (LCNENFRKTFKRILRIPP).

Belongs to the G-protein coupled receptor 1 family. Phosphorylation at sites in the second and third cytoplasmic loops independently contribute to agonist-induced receptor down-regulation.

It is found in the cell membrane. Its function is as follows. G-protein-coupled receptor for histamine, a biogenic amine that functions as an immune modulator and a neurotransmitter. Through the H1 receptor, histamine mediates the contraction of smooth muscles and increases capillary permeability due to contraction of terminal venules. Also mediates neurotransmission in the central nervous system and thereby regulates circadian rhythms, emotional and locomotor activities as well as cognitive functions. The sequence is that of Histamine H1 receptor from Cavia porcellus (Guinea pig).